We begin with the raw amino-acid sequence, 360 residues long: Ribosomal RNA small subunit methyltransferase C (360 aa).

Belongs to the methyltransferase superfamily. RsmC family. Monomer.

It localises to the cytoplasm. The enzyme catalyses guanosine(1207) in 16S rRNA + S-adenosyl-L-methionine = N(2)-methylguanosine(1207) in 16S rRNA + S-adenosyl-L-homocysteine + H(+). Functionally, specifically methylates the guanine in position 1207 of 16S rRNA in the 30S particle. The polypeptide is Ribosomal RNA small subunit methyltransferase C (Alteromonas mediterranea (strain DSM 17117 / CIP 110805 / LMG 28347 / Deep ecotype)).